The following is a 325-amino-acid chain: Release factor glutamine methyltransferase (325 aa).

Residues 141–145, aspartate 164, tryptophan 193, and asparagine 207 each bind S-adenosyl-L-methionine; that span reads GTGSG. 207–210 provides a ligand contact to substrate; sequence NPPY. The segment at 306–325 is disordered; the sequence is LPPIHIDAKPSAPGNGPTKA.

The protein belongs to the protein N5-glutamine methyltransferase family. PrmC subfamily.

The catalysed reaction is L-glutaminyl-[peptide chain release factor] + S-adenosyl-L-methionine = N(5)-methyl-L-glutaminyl-[peptide chain release factor] + S-adenosyl-L-homocysteine + H(+). In terms of biological role, methylates the class 1 translation termination release factors RF1/PrfA and RF2/PrfB on the glutamine residue of the universally conserved GGQ motif. In Rhodospirillum rubrum (strain ATCC 11170 / ATH 1.1.1 / DSM 467 / LMG 4362 / NCIMB 8255 / S1), this protein is Release factor glutamine methyltransferase.